The primary structure comprises 496 residues: Probable malate:quinone oxidoreductase (496 aa).

It belongs to the MQO family. FAD serves as cofactor.

The catalysed reaction is (S)-malate + a quinone = a quinol + oxaloacetate. It functions in the pathway carbohydrate metabolism; tricarboxylic acid cycle; oxaloacetate from (S)-malate (quinone route): step 1/1. The sequence is that of Probable malate:quinone oxidoreductase from Prochlorococcus marinus (strain MIT 9303).